Consider the following 400-residue polypeptide: NADH-quinone oxidoreductase subunit D (400 aa).

The protein belongs to the complex I 49 kDa subunit family. As to quaternary structure, NDH-1 is composed of 14 different subunits. Subunits NuoB, C, D, E, F, and G constitute the peripheral sector of the complex.

It localises to the cell inner membrane. It catalyses the reaction a quinone + NADH + 5 H(+)(in) = a quinol + NAD(+) + 4 H(+)(out). NDH-1 shuttles electrons from NADH, via FMN and iron-sulfur (Fe-S) centers, to quinones in the respiratory chain. The immediate electron acceptor for the enzyme in this species is believed to be a menaquinone. Couples the redox reaction to proton translocation (for every two electrons transferred, four hydrogen ions are translocated across the cytoplasmic membrane), and thus conserves the redox energy in a proton gradient. This chain is NADH-quinone oxidoreductase subunit D, found in Chlorobium phaeovibrioides (strain DSM 265 / 1930) (Prosthecochloris vibrioformis (strain DSM 265)).